Consider the following 164-residue polypeptide: Oocyte-expressed protein homolog (164 aa).

The KH; atypical domain maps to Pro-44–Leu-105.

It belongs to the KHDC1 family. As to quaternary structure, component of the subcortical maternal complex (SCMC), at least composed of NLRP5, KHDC3, OOEP, and TLE6. Within the complex, interacts with NLRP5, KHDC3 and TLE6. The SCMC may facilitate translocation of its components between the nuclear and cytoplasmic compartments. As part of the SCMC interacts with the SCMC-associated protein NLRP4F. Forms a scaffold complex with KHDC3/FILIA, and interacts with BLM and TRIM25 at DNA replication forks. As to expression, expressed in ovaries, where it is restricted to growing oocytes, with greatest levels in fully grown oocytes.

Its subcellular location is the cytoplasm. It is found in the nucleus. Functionally, component of the subcortical maternal complex (SCMC), a multiprotein complex that plays a key role in early embryonic development. The SCMC complex is a structural constituent of cytoplasmic lattices, which consist in fibrous structures found in the cytoplasm of oocytes and preimplantation embryos. They are required to store maternal proteins critical for embryonic development, such as proteins that control epigenetic reprogramming of the preimplantation embryo, and prevent their degradation or activation. As part of the OOEP-KHDC3 scaffold, recruits BLM and TRIM25 to DNA replication forks, thereby promoting the ubiquitination of BLM by TRIM25, enhancing BLM retainment at replication forks and therefore promoting stalled replication fork restart. Positively regulates the homologous recombination-mediated DNA double-strand break (DSB) repair pathway by regulating ATM activation and RAD51 recruitment to DSBs in oocytes. Thereby contributes to oocyte survival and the resumption and completion of meiosis. The chain is Oocyte-expressed protein homolog from Mus musculus (Mouse).